The chain runs to 311 residues: p-hydroxybenzoic acid efflux pump subunit AaeA (311 aa).

The chain crosses the membrane as a helical span at residues 11 to 31; it reads IAITLILVLLGIIAIFKAWVF.

The protein belongs to the membrane fusion protein (MFP) (TC 8.A.1) family.

Its subcellular location is the cell inner membrane. Its function is as follows. Forms an efflux pump with AaeB. The chain is p-hydroxybenzoic acid efflux pump subunit AaeA from Serratia proteamaculans (strain 568).